Consider the following 259-residue polypeptide: Protein GrpE (259 aa).

Disordered stretches follow at residues 1–74 (MNSD…IKGS) and 228–259 (PGPKVINEEIPDQSASNQELSESVDGSTKDEN). Over residues 17–40 (SSQNNPSENSVSSPNSNESVNQVE) the composition is skewed to low complexity. Composition is skewed to polar residues over residues 56–73 (VDTANEQSSTSCESNIKG) and 240–253 (QSASNQELSESVDG).

It belongs to the GrpE family. As to quaternary structure, homodimer.

Its subcellular location is the cytoplasm. Functionally, participates actively in the response to hyperosmotic and heat shock by preventing the aggregation of stress-denatured proteins, in association with DnaK and GrpE. It is the nucleotide exchange factor for DnaK and may function as a thermosensor. Unfolded proteins bind initially to DnaJ; upon interaction with the DnaJ-bound protein, DnaK hydrolyzes its bound ATP, resulting in the formation of a stable complex. GrpE releases ADP from DnaK; ATP binding to DnaK triggers the release of the substrate protein, thus completing the reaction cycle. Several rounds of ATP-dependent interactions between DnaJ, DnaK and GrpE are required for fully efficient folding. This Prochlorococcus marinus (strain NATL2A) protein is Protein GrpE.